Consider the following 662-residue polypeptide: Interferon-induced GTP-binding protein Mx1 (662 aa).

M1 bears the N-acetylmethionine mark. Residues 67-340 (DLALPAIAVI…LITHICKSLP (274 aa)) form the Dynamin-type G domain. The segment at 77-84 (GDQSSGKS) is G1 motif. 77–84 (GDQSSGKS) contributes to the GTP binding site. The G2 motif stretch occupies residues 102 to 104 (VTR). The interval 178-181 (DLPG) is G3 motif. GTP is bound by residues 178–182 (DLPGI) and 247–250 (TKPD). A G4 motif region spans residues 247–250 (TKPD). Residues 279–282 (KCRG) are G5 motif. The interval 341-366 (LLENQIRESHQRITEELQKYGVDVPE) is bundle signaling element (BSE). Residues 366 to 533 (EDENEKMFFL…HFQMEQIVYC (168 aa)) form a middle domain region. The stalk stretch occupies residues 367-632 (DENEKMFFLI…KDTYSWLLKE (266 aa)). Residues 554 to 557 (KKKK) are critical for lipid-binding. One can recognise a GED domain in the interval 574–662 (MEEIFQHLMA…ARRRLAQFPG (89 aa)).

This sequence belongs to the TRAFAC class dynamin-like GTPase superfamily. Dynamin/Fzo/YdjA family. In terms of assembly, homooligomer. Oligomerizes into multimeric filamentous or ring-like structures by virtue of its stalk domain. Oligomerization is critical for GTPase activity, protein stability, and recognition of viral target structures. Interacts with TRPC1, TRPC3, TRPC4, TRPC5, TRPC6 and TRPC7. Interacts with HSPA5. Interacts with TUBB/TUBB5. Interacts with DDX39A and DDX39B. ISGylated.

It is found in the cytoplasm. Its subcellular location is the endoplasmic reticulum membrane. The protein resides in the perinuclear region. Its function is as follows. Interferon-induced dynamin-like GTPase with antiviral activity. The sequence is that of Interferon-induced GTP-binding protein Mx1 (MX1) from Pongo abelii (Sumatran orangutan).